The primary structure comprises 275 residues: Hemin import ATP-binding protein HmuV (275 aa).

One can recognise an ABC transporter domain in the interval 2-242; that stretch reads LKAAGIGVRL…EWIETGFGLQ (241 aa). 34–41 provides a ligand contact to ATP; sequence GPNGAGKS.

This sequence belongs to the ABC transporter superfamily. Heme (hemin) importer (TC 3.A.1.14.5) family. In terms of assembly, the complex is composed of two ATP-binding proteins (HmuV), two transmembrane proteins (HmuU) and a solute-binding protein (HmuT).

It is found in the cell inner membrane. In terms of biological role, part of the ABC transporter complex HmuTUV involved in hemin import. Responsible for energy coupling to the transport system. The chain is Hemin import ATP-binding protein HmuV from Gloeobacter violaceus (strain ATCC 29082 / PCC 7421).